The chain runs to 556 residues: Secreted RxLR effector protein 114 (556 aa).

The first 19 residues, 1 to 19 (MCGAHFVAIALLVAAGCQT), serve as a signal peptide directing secretion. Disordered stretches follow at residues 43 to 76 (LQSR…GVLK), 108 to 138 (NQLK…DSDK), and 389 to 408 (NDKS…EDWN). The short motif at 46–66 (RNLRESRDSKDDLLSAGDEER) is the RxLR-dEER element. A compositionally biased stretch (basic and acidic residues) spans 47 to 67 (NLRESRDSKDDLLSAGDEERT).

The protein belongs to the RxLR effector family.

The protein localises to the secreted. Its subcellular location is the host cell. Secreted effector that partially suppresses the host cell death induced by cell death-inducing proteins. The chain is Secreted RxLR effector protein 114 from Plasmopara viticola (Downy mildew of grapevine).